The primary structure comprises 635 residues: MAPVTIEKFVNQEERHLVSNRSATIPFGEYIFKRLLSIDTKSVFGVPGDFNLSLLEYLYSPSVESAGLRWVGTCNELNAAYAADGYSRYSNKIGCLITTYGVGELSALNGIAGSFAENVKVLHIVGVAKSIDSRSSNFSDRNLHHLVPQLHDSNFKGPNHKVYHDMVKDRVACSVAYLEDIETACDQVDNVIRDIYKYSKPGYIFVPADFADMSVTCDNLVNVPRISQQDCIVYPSENQLSDIINKITSWIYSSKTPAILGDVLTDRYGVSNFLNKLICKTGIWNFSTVMGKSVIDESNPTYMGQYNGKEGLKQVYEHFELCDLVLHFGVDINEINNGHYTFTYKPNAKIIQFHPNYIRLVDTRQGNEQMFKGINFAPILKELYKRIDVSKLSLQYDSNVTQYTNETMRLEDPTNGQSSIITQVHLQKTMPKFLNPGDVVVCETGSFQFSVRDFAFPSQLKYISQGFFLSIGMALPAALGVGIAMQDHSNAHINGGNVKEDYKPRLILFEGDGAAQMTIQELSTILKCNIPLEVIIWNNNGYTIERAIMGPTRSYNDVMSWKWTKLFEAFGDFDGKYTNSTLIQCPSKLALKLEELKNSNKRSGIELLEVKLGELDFPEQLKCMVEAAALKRNKK.

A Glycyl lysine isopeptide (Lys-Gly) (interchain with G-Cter in ubiquitin) cross-link involves residue Lys588.

It belongs to the TPP enzyme family. Requires Mg(2+) as cofactor. Thiamine diphosphate serves as cofactor.

The protein localises to the cytoplasm. It catalyses the reaction 4-methyl-2-oxopentanoate + H(+) = 3-methylbutanal + CO2. It carries out the reaction (S)-3-methyl-2-oxopentanoate + H(+) = 2-methylbutanal + CO2. The enzyme catalyses indole-3-pyruvate + H(+) = indole-3-acetaldehyde + CO2. The catalysed reaction is 3-phenylpyruvate + H(+) = 2-phenylacetaldehyde + CO2. It catalyses the reaction 4-methylsulfanyl-2-oxobutanoate + H(+) = 3-methylsulfanylpropanal + CO2. It carries out the reaction 3-(4-hydroxyphenyl)pyruvate + H(+) = (4-hydroxyphenyl)acetaldehyde + CO2. It functions in the pathway amino-acid degradation; Ehrlich pathway. In terms of biological role, one of five 2-oxo acid decarboxylases (PDC1, PDC5, PDC6, ARO10, and THI3) involved in amino acid catabolism. The enzyme catalyzes the decarboxylation of amino acids, which, in a first step, have been transaminated to the corresponding 2-oxo acids (alpha-keto-acids). In a third step, the resulting aldehydes are reduced to alcohols, collectively referred to as fusel oils or alcohols. Its preferred substrates are the transaminated amino acids derived from phenylalanine (phenylpyruvate), tryptophan (3-(indol-3-yl)pyruvate), and probably tyrosine (4-hydroxyphenylpyruvate), but also isoleucine ((3S)-3-methyl-2-oxopentanoate, also alpha-keto-beta-methylvalerate) and methionine (4-methylthio-2-oxobutanoate), whereas transaminated leucine (4-methyl-2-oxopentanoate, also alpha-keto-isocaproate) is a low efficiency substrate and transaminated valine and pyruvate are no substrates. In analogy to the pyruvate decarboxylases the enzyme may in a side-reaction catalyze condensation (or carboligation) reactions leading to the formation of 2-hydroxy ketone, collectively called acyloins. This chain is Transaminated amino acid decarboxylase (ARO10), found in Saccharomyces cerevisiae (strain ATCC 204508 / S288c) (Baker's yeast).